Here is a 476-residue protein sequence, read N- to C-terminus: ATP synthase subunit beta (476 aa).

154–161 contacts ATP; it reads GGAGVGKT.

The protein belongs to the ATPase alpha/beta chains family. As to quaternary structure, F-type ATPases have 2 components, CF(1) - the catalytic core - and CF(0) - the membrane proton channel. CF(1) has five subunits: alpha(3), beta(3), gamma(1), delta(1), epsilon(1). CF(0) has three main subunits: a(1), b(2) and c(9-12). The alpha and beta chains form an alternating ring which encloses part of the gamma chain. CF(1) is attached to CF(0) by a central stalk formed by the gamma and epsilon chains, while a peripheral stalk is formed by the delta and b chains.

It is found in the cell inner membrane. It catalyses the reaction ATP + H2O + 4 H(+)(in) = ADP + phosphate + 5 H(+)(out). Functionally, produces ATP from ADP in the presence of a proton gradient across the membrane. The catalytic sites are hosted primarily by the beta subunits. This Nitrobacter hamburgensis (strain DSM 10229 / NCIMB 13809 / X14) protein is ATP synthase subunit beta.